Reading from the N-terminus, the 802-residue chain is Putative flavin carrier protein 3 (802 aa).

The N-terminal stretch at 1 to 28 is a signal peptide; the sequence is MRFLQVYKSSALIGLIILLASKVNLAEA. Residues 29–169 lie on the Lumenal side of the membrane; that stretch reads KRKLVATSLV…YFSNGKTVSQ (141 aa). N-linked (GlcNAc...) asparagine glycosylation is present at Asn-149. The helical transmembrane segment at 170 to 190 threads the bilayer; the sequence is IGVKWATAVVAGIGLLLSAIL. Topologically, residues 191-200 are cytoplasmic; sequence STFGNSTAAS. A helical membrane pass occupies residues 201–221; sequence HISANTMSLFLYFQSVVVVAM. Residues 222 to 229 are Lumenal-facing; the sequence is QHVHRVPP. Residues 230 to 250 form a helical membrane-spanning segment; the sequence is IAAAWAENLVWSMGLIRISFM. The Cytoplasmic portion of the chain corresponds to 251 to 255; the sequence is QRIFR. The chain crosses the membrane as a helical span at residues 256 to 278; it reads WYVQSTGGTPSLYLTSTSMSVLA. Residues 279 to 323 lie on the Lumenal side of the membrane; the sequence is QRSWQYLMELPLIKRATNVLYGNANTLIFRGIKRLGYKMGIENTS. N-linked (GlcNAc...) asparagine glycosylation occurs at Asn-321. A helical membrane pass occupies residues 324–344; sequence IVCTGFTFFVLCGYVLAGFII. The Cytoplasmic segment spans residues 345-377; it reads VFKCCVELATRLGWIQKARFWEFRKQWRMILKG. A helical transmembrane segment spans residues 378–398; sequence ALLRYIYIGFVQLTILSFWEF. Residues 399 to 405 lie on the Lumenal side of the membrane; that stretch reads TERDSPA. A helical transmembrane segment spans residues 406-426; the sequence is VIVIACLFILLSCGLMLWAAW. Over 427 to 467 the chain is Cytoplasmic; sequence RTVFFARRSVALYNNPAALLYGDEYVLHKYGFFYTMFNANH. A helical transmembrane segment spans residues 468–488; the sequence is YWWNIVLLSYIFVKSLLVGFA. Topologically, residues 489–495 are lumenal; that stretch reads QASGQTQ. Residues 496–516 form a helical membrane-spanning segment; it reads VLFMFILDLFYFVAIIYYKPY. The Cytoplasmic segment spans residues 517-525; that stretch reads LDRPTNIMN. Residues 526-546 form a helical membrane-spanning segment; that stretch reads ILIATVTVVNSFLFMFFSDLF. Asn-547 is a glycosylation site (N-linked (GlcNAc...) asparagine). Topologically, residues 547-557 are lumenal; sequence NQSYKVAAIMG. Residues 558–578 traverse the membrane as a helical segment; the sequence is WIFFIMNAAFSFILLMMILAF. The Cytoplasmic segment spans residues 579–802; that stretch reads AGMMLFSKNP…PPGFFDEGFM (224 aa). 2 positions are modified to phosphoserine: Ser-616 and Ser-635. The tract at residues 629 to 802 is disordered; the sequence is KDHDDNSDYE…PPGFFDEGFM (174 aa). Composition is skewed to polar residues over residues 653 to 663, 697 to 717, and 761 to 788; these read DETTPTTVTSS, KQQT…STLG, and DTSS…NNKQ. Residues Ser-779 and Ser-782 each carry the phosphoserine modification.

The protein belongs to the transient receptor potential (TRP) ion channel family.

The protein resides in the endoplasmic reticulum membrane. Its function is as follows. May be responsible for the transport of FAD into the endoplasmic reticulum lumen, where it is required for oxidative protein folding. In Saccharomyces cerevisiae (strain ATCC 204508 / S288c) (Baker's yeast), this protein is Putative flavin carrier protein 3 (FLC3).